The primary structure comprises 545 residues: Chaperonin GroEL 1 (545 aa).

Residues 29–32 (TLGP), 86–90 (DGTTT), Gly-413, 477–479 (NAA), and Asp-493 each bind ATP.

The protein belongs to the chaperonin (HSP60) family. In terms of assembly, forms a cylinder of 14 subunits composed of two heptameric rings stacked back-to-back. Interacts with the co-chaperonin GroES.

The protein localises to the cytoplasm. The enzyme catalyses ATP + H2O + a folded polypeptide = ADP + phosphate + an unfolded polypeptide.. Together with its co-chaperonin GroES, plays an essential role in assisting protein folding. The GroEL-GroES system forms a nano-cage that allows encapsulation of the non-native substrate proteins and provides a physical environment optimized to promote and accelerate protein folding. This is Chaperonin GroEL 1 from Arthrobacter sp. (strain FB24).